The primary structure comprises 234 residues: Small ribosomal subunit protein uS3 (234 aa).

One can recognise a KH type-2 domain in the interval 39-107; sequence IRKFLKKELY…EVSINIKEVK (69 aa).

Belongs to the universal ribosomal protein uS3 family. Part of the 30S ribosomal subunit. Forms a tight complex with proteins S10 and S14.

Functionally, binds the lower part of the 30S subunit head. Binds mRNA in the 70S ribosome, positioning it for translation. The protein is Small ribosomal subunit protein uS3 of Helicobacter pylori (strain P12).